The following is a 440-amino-acid chain: MISIKRLSSADTEFDKALSELLAFENTQDAKLEAAVADILAKIRTEGDKALLEYTLRFDRVDAKSAADLELPRNRLQQALHNLPGEQRNALEQAAERVRVYHEKQLTQSWSYVEPDGTHLGQKITPLDRAGLYVPGGKAAYPSSVLMNAIPAKVAGVGELVMVTPTPQGEVNDLVLAAAAICEVDRVFTIGGAQAVGALAYGTPTVPRVDKIVGPGNAYVATAKRHVFGVVGIDMLAGPSEILIICDGKTNPDWIAMDMFSQAEHDELAQAILLSPDLHFIETVAASIVRQLETMPRKEIIRTSLENRSALIQVHDLEEACEIANSIAPEHLELSVEQPEKWVEKIRHAGAIFLGRHTSEALGDYCAGPNHVLPTSRTARFSSPLGVYDFQKRSSIIQVSGQGSAKLGAIASILAQGEGLQAHAMSAEYRYTKKIALGKN.

3 residues coordinate NAD(+): tyrosine 133, glutamine 194, and asparagine 217. Positions 240, 262, and 265 each coordinate substrate. Zn(2+) contacts are provided by glutamine 262 and histidine 265. Active-site proton acceptor residues include glutamate 330 and histidine 331. Substrate contacts are provided by histidine 331, aspartate 364, glutamate 418, and histidine 423. A Zn(2+)-binding site is contributed by aspartate 364. Position 423 (histidine 423) interacts with Zn(2+).

The protein belongs to the histidinol dehydrogenase family. Zn(2+) serves as cofactor.

The catalysed reaction is L-histidinol + 2 NAD(+) + H2O = L-histidine + 2 NADH + 3 H(+). It functions in the pathway amino-acid biosynthesis; L-histidine biosynthesis; L-histidine from 5-phospho-alpha-D-ribose 1-diphosphate: step 9/9. In terms of biological role, catalyzes the sequential NAD-dependent oxidations of L-histidinol to L-histidinaldehyde and then to L-histidine. The sequence is that of Histidinol dehydrogenase from Nitrosospira multiformis (strain ATCC 25196 / NCIMB 11849 / C 71).